The following is a 261-amino-acid chain: tRNA pseudouridine synthase A (261 aa).

The active-site Nucleophile is the Asp-51. Tyr-109 serves as a coordination point for substrate.

This sequence belongs to the tRNA pseudouridine synthase TruA family. Homodimer.

It carries out the reaction uridine(38/39/40) in tRNA = pseudouridine(38/39/40) in tRNA. In terms of biological role, formation of pseudouridine at positions 38, 39 and 40 in the anticodon stem and loop of transfer RNAs. This chain is tRNA pseudouridine synthase A, found in Psychromonas ingrahamii (strain DSM 17664 / CCUG 51855 / 37).